Reading from the N-terminus, the 653-residue chain is Putative clathrin assembly protein At2g25430 (653 aa).

Residues 23–159 (VASNMAPDLE…ELALFERKSG (137 aa)) enclose the ENTH domain. Residues 160-171 (VSVNSGGNSSHH) show a composition bias toward low complexity. Residues 160-240 (VSVNSGGNSS…GGGGGGRDEK (81 aa)) are disordered. The span at 172-186 (SNNDDRYGRGRDDFR) shows a compositional bias: basic and acidic residues. Gly residues predominate over residues 197 to 214 (NGGGGGSDFRGDNNGYGG). The residue at position 221 (S221) is a Phosphoserine. A Phosphothreonine modification is found at T244. Residues 376–389 (RAKRGKSPERKEIE) show a composition bias toward basic and acidic residues. Residues 376-431 (RAKRGKSPERKEIEAPPPVVEEEEPEPDMNEIKALPPPENYTPPPPPEPEPQPEKP) form a disordered region. A compositionally biased stretch (acidic residues) spans 395–404 (VEEEEPEPDM). Pro residues predominate over residues 410–425 (LPPPENYTPPPPPEPE).

Its subcellular location is the membrane. The protein localises to the clathrin-coated pit. It is found in the golgi apparatus. It localises to the cytoplasmic vesicle. The protein resides in the clathrin-coated vesicle. The chain is Putative clathrin assembly protein At2g25430 from Arabidopsis thaliana (Mouse-ear cress).